The following is a 370-amino-acid chain: Protein Brevis radix-like 3 (370 aa).

The region spanning 140–221 is the BRX 1 domain; sequence KEWVAQVEPG…NFEKVMELYN (82 aa). 2 stretches are compositionally biased toward polar residues: residues 231–248 and 266–291; these read LQTPPVSEDGGSQIQSVK and PGSSGFASTPKLSSISGTKTETSSID. Residues 231-316 are disordered; the sequence is LQTPPVSEDG…VSNASDMESE (86 aa). Residues 315–370 form the BRX 2 domain; it reads SEWVEQDEPGIYITIRALPDGNRELRRVRFSRDKFGETHARLWWEQNRARIQQQYL.

The protein belongs to the BRX family. As to expression, expressed in roots.

Its subcellular location is the nucleus. The polypeptide is Protein Brevis radix-like 3 (BRXL3) (Arabidopsis thaliana (Mouse-ear cress)).